We begin with the raw amino-acid sequence, 459 residues long: Argininosuccinate lyase (459 aa).

This sequence belongs to the lyase 1 family. Argininosuccinate lyase subfamily.

The protein resides in the cytoplasm. The catalysed reaction is 2-(N(omega)-L-arginino)succinate = fumarate + L-arginine. Its pathway is amino-acid biosynthesis; L-arginine biosynthesis; L-arginine from L-ornithine and carbamoyl phosphate: step 3/3. The protein is Argininosuccinate lyase of Oceanobacillus iheyensis (strain DSM 14371 / CIP 107618 / JCM 11309 / KCTC 3954 / HTE831).